The primary structure comprises 515 residues: 2,3-bisphosphoglycerate-independent phosphoglycerate mutase 1 (515 aa).

Mn(2+) is bound by residues aspartate 14 and serine 64. The active-site Phosphoserine intermediate is serine 64. Substrate contacts are provided by residues histidine 125, 155–156 (RD), arginine 187, arginine 193, 264–267 (RADR), and lysine 337. Residues aspartate 404, histidine 408, aspartate 445, histidine 446, and histidine 464 each contribute to the Mn(2+) site.

The protein belongs to the BPG-independent phosphoglycerate mutase family. Requires Mn(2+) as cofactor.

It carries out the reaction (2R)-2-phosphoglycerate = (2R)-3-phosphoglycerate. The protein operates within carbohydrate degradation; glycolysis; pyruvate from D-glyceraldehyde 3-phosphate: step 3/5. Functionally, catalyzes the interconversion of 2-phosphoglycerate and 3-phosphoglycerate. The sequence is that of 2,3-bisphosphoglycerate-independent phosphoglycerate mutase 1 from Methanosarcina acetivorans (strain ATCC 35395 / DSM 2834 / JCM 12185 / C2A).